The chain runs to 123 residues: MVRLIGVDLPRNKRIAYALTYIHGIGITSARKIIELAEISPETRTDDLTTEQTIALRDQLESIDLNLEGDLRCFNGLNIKRLNEINCHRGKRHRNNLPVRGQRTRTNARSRRGSKKTVTGKKK.

The disordered stretch occupies residues Gly-90 to Lys-123. The segment covering Gln-102 to Lys-123 has biased composition (basic residues).

It belongs to the universal ribosomal protein uS13 family. As to quaternary structure, part of the 30S ribosomal subunit.

The protein localises to the plastid. It localises to the chloroplast. Functionally, located at the top of the head of the 30S subunit, it contacts several helices of the 16S rRNA. The chain is Small ribosomal subunit protein uS13c from Trieres chinensis (Marine centric diatom).